Consider the following 527-residue polypeptide: Lysine--tRNA ligase (527 aa).

The short motif at 44 to 52 (PSGLPHIGT) is the 'HIGH' region element. The 'KMSKS' region signature appears at 290–294 (KISKS). K293 is a binding site for ATP.

Belongs to the class-I aminoacyl-tRNA synthetase family.

It localises to the cytoplasm. It catalyses the reaction tRNA(Lys) + L-lysine + ATP = L-lysyl-tRNA(Lys) + AMP + diphosphate. This Roseobacter denitrificans (strain ATCC 33942 / OCh 114) (Erythrobacter sp. (strain OCh 114)) protein is Lysine--tRNA ligase.